The chain runs to 492 residues: Glutamyl-tRNA(Gln) amidotransferase subunit A, mitochondrial (492 aa).

Residues Lys-78 and Ser-159 each act as charge relay system in the active site. The active-site Acyl-ester intermediate is the Ser-183.

Belongs to the amidase family. GatA subfamily. Subunit of the heterotrimeric GatCAB amidotransferase (AdT) complex, composed of A, B and C subunits.

Its subcellular location is the mitochondrion. It carries out the reaction L-glutamyl-tRNA(Gln) + L-glutamine + ATP + H2O = L-glutaminyl-tRNA(Gln) + L-glutamate + ADP + phosphate + H(+). Its function is as follows. Allows the formation of correctly charged Gln-tRNA(Gln) through the transamidation of misacylated Glu-tRNA(Gln) in the mitochondria. The reaction takes place in the presence of glutamine and ATP through an activated gamma-phospho-Glu-tRNA(Gln). The polypeptide is Glutamyl-tRNA(Gln) amidotransferase subunit A, mitochondrial (Anopheles gambiae (African malaria mosquito)).